The chain runs to 584 residues: Putative sel1-like repeat-containing protein L18 (584 aa).

Sel1-like repeat units lie at residues 132–167 (SMAQYNLGQMYYRGISTKKNIQKAIKWITKSADQNN), 168–203 (KYGLINLARFYEYGDGVLLDIDKATQLLEQASCQNF), 204–237 (SKAQFYLGRIYMYKDPPDYKLAFKYYQQAANQNH), 238–273 (SSAQYFIAVFYKTGKCVAQDYKKAVHWLTLAASQGL), 274–309 (NSAKIKLAEMYMKGIDVEQNYHKAFELLNSSIYDDG), and 316–351 (EVAMTELACMYKRGLGIEKNISKAIYLHIKSRNTKN).

This Acanthamoeba polyphaga (Amoeba) protein is Putative sel1-like repeat-containing protein L18.